We begin with the raw amino-acid sequence, 234 residues long: 1-(5-phosphoribosyl)-5-[(5-phosphoribosylamino)methylideneamino] imidazole-4-carboxamide isomerase (234 aa).

The Proton acceptor role is filled by Asp9. Catalysis depends on Asp131, which acts as the Proton donor.

It belongs to the HisA/HisF family.

Its subcellular location is the cytoplasm. The catalysed reaction is 1-(5-phospho-beta-D-ribosyl)-5-[(5-phospho-beta-D-ribosylamino)methylideneamino]imidazole-4-carboxamide = 5-[(5-phospho-1-deoxy-D-ribulos-1-ylimino)methylamino]-1-(5-phospho-beta-D-ribosyl)imidazole-4-carboxamide. Its pathway is amino-acid biosynthesis; L-histidine biosynthesis; L-histidine from 5-phospho-alpha-D-ribose 1-diphosphate: step 4/9. The polypeptide is 1-(5-phosphoribosyl)-5-[(5-phosphoribosylamino)methylideneamino] imidazole-4-carboxamide isomerase (Staphylococcus aureus (strain JH1)).